A 136-amino-acid polypeptide reads, in one-letter code: SPbeta prophage-derived uncharacterized protein YonI (136 aa).

The protein is SPbeta prophage-derived uncharacterized protein YonI (yonI) of Bacillus subtilis (strain 168).